A 449-amino-acid chain; its full sequence is Tapasin (449 aa).

An N-terminal signal peptide occupies residues Met1 to Ala20. Residues Gly21–Ser413 lie on the Lumenal side of the membrane. Cys27 and Cys91 form a disulfide bridge. Residue Asn253 is glycosylated (N-linked (GlcNAc...) asparagine). The Ig-like C1-type domain occupies Pro292 to Thr399. Cys315 and Cys382 are oxidised to a cystine. Residues Val414–Ala434 form a helical membrane-spanning segment. Residues Ala435–Gln449 are Cytoplasmic-facing.

In terms of assembly, heterodimer with PDIA3; disulfide-linked. Obligatory mediator for the interaction between newly assembled MHC class I molecules, calreticulin, PDIA3 and TAP. Up to 4 MHC class I/tapasin complexes bind to 1 TAP. Interacts with HLA-G-B2M complex; this interaction is required for loading of high affinity peptides. On its own or as part of MHC class I peptide loading complex, interacts with ligand-free MR1 or MR1-B2M complex, providing for stable MR1 pools ready for metabolite antigen processing.

The protein resides in the endoplasmic reticulum membrane. Involved in the association of MHC class I with transporter associated with antigen processing (TAP) and in the assembly of MHC class I with peptide (peptide loading). This is Tapasin (TAPBP) from Canis lupus familiaris (Dog).